Here is a 758-residue protein sequence, read N- to C-terminus: Spastin (758 aa).

The tract at residues 1 to 103 (MVRTKNQSSS…SPRSGHHHSY (103 aa)) is disordered. Residues 1-121 (MVRTKNQSSS…KQNLYVVSFP (121 aa)) lie on the Cytoplasmic side of the membrane. A required for localization to punctate cytoplasmic foci region spans residues 1–210 (MVRTKNQSSS…RPIQPLEMAA (210 aa)). Low complexity-rich tracts occupy residues 8–28 (SSSS…SSGA), 43–58 (RSSS…AGGS), 66–76 (SSNRRSPGSSP), and 85–95 (TDDLTPTTCSP). The helical intramembrane region spans 122 to 142 (IIFLFNVLRSLIYQLFCIFRY). Topologically, residues 143–758 (LYGASTKVIY…WSQDYGDITI (616 aa)) are cytoplasmic. Polar residues-rich tracts occupy residues 169–180 (SKEQQQSLNHPS) and 189–198 (QEQQLSNQPQ). The interval 169–202 (SKEQQQSLNHPSELNREGDGQEQQLSNQPQRFRP) is disordered. Residues 208 to 758 (MAANRPGGGY…WSQDYGDITI (551 aa)) form a sufficient for interaction with microtubules and microtubule severing region. Positions 233–308 (HRRAFEYISK…SMARDRLHFL (76 aa)) constitute an MIT domain. Residues 323 to 339 (KEKQKEEARSKPQKSRE) show a composition bias toward basic and acidic residues. The tract at residues 323–454 (KEKQKEEARS…GPSGSGASTP (132 aa)) is disordered. Polar residues-rich tracts occupy residues 390 to 406 (NKSQ…TSVG) and 425 to 454 (QFSS…ASTP). Positions 443-455 (NNGPSGSGASTPV) are required for interaction with microtubules. 523–530 (GPPGNGKT) is an ATP binding site.

It belongs to the AAA ATPase family. Spastin subfamily. In terms of assembly, homohexamer. The homohexamer is stabilized by ATP-binding. The homohexamer may adopt a ring conformation through which microtubules pass prior to being severed. Interacts with microtubules. Interacts with atl; may be involved in microtubule dynamics.

Its subcellular location is the membrane. It is found in the cytoplasm. It localises to the cytoskeleton. The protein localises to the microtubule organizing center. The protein resides in the centrosome. Its subcellular location is the chromosome. It is found in the lipid droplet. It carries out the reaction n ATP + n H2O + a microtubule = n ADP + n phosphate + (n+1) alpha/beta tubulin heterodimers.. In terms of biological role, ATP-dependent microtubule severing protein. Stimulates microtubule minus-end depolymerization and poleward microtubule flux in the mitotic spindle. Regulates microtubule stability in the neuromuscular junction synapse. Involved in lipid metabolism by regulating the size and distribution of lipid droplets. Involved in axon regeneration by regulating microtubule severing. The polypeptide is Spastin (Drosophila simulans (Fruit fly)).